Consider the following 506-residue polypeptide: MSEQFILQPGQLSLLSIKQILDEELSCVLAENSFELIRASHQTVKKVIDEKKTVYGINTGFGSLANQTISSDCLKELQRNIVLSHACGTGKLLPDDVVALILLLKINNLSQGYSGVRLELINALIALFNHKVYPCIPSKGSVGASGDLVPLAHLSLPLLGEGEVRHQGQVISAEEGLKLAGLKPLELEAKEGLALLNGLQVSTALALSALFISETLFETAIISGSLSVDAASGSDVPFDDRIHQIRGHQAQISAASMYRNLLAGSQIRESHRHCNRVQDPYSLRCQPQIMGAILHQMQFVGQTLQVEANAISDNPLVFAEQGDILSGGNFHGEIIAMAADNLALALSEIGGSAERRIALLIDKNFSGLPAFLVRESGLNSGFMIAHVTAASCASDNKALAHPHSVDSLPTSANQEDHVSMATSAARRLHEMIDNTSTILAIELLAACQGLEFHKPLKTSPQLDKIYQSVRSVVKEYDKDRYFAPDIEKIKKKILDKEFSLLTLTNE.

Positions 144–146 (ASG) form a cross-link, 5-imidazolinone (Ala-Gly). At S145 the chain carries 2,3-didehydroalanine (Ser).

This sequence belongs to the PAL/histidase family. Contains an active site 4-methylidene-imidazol-5-one (MIO), which is formed autocatalytically by cyclization and dehydration of residues Ala-Ser-Gly.

It is found in the cytoplasm. It catalyses the reaction L-histidine = trans-urocanate + NH4(+). Its pathway is amino-acid degradation; L-histidine degradation into L-glutamate; N-formimidoyl-L-glutamate from L-histidine: step 1/3. This is Histidine ammonia-lyase from Legionella pneumophila subsp. pneumophila (strain Philadelphia 1 / ATCC 33152 / DSM 7513).